The following is a 159-amino-acid chain: Eukaryotic translation initiation factor 5A-2 (159 aa).

The segment covering 1-12 (MSDEEHQFESKA) has biased composition (basic and acidic residues). Residues 1 to 23 (MSDEEHQFESKADAGASKTYPQQ) are disordered. The residue at position 52 (lysine 52) is a Hypusine.

It belongs to the eIF-5A family. Post-translationally, lys-52 undergoes hypusination, a unique post-translational modification that consists in the addition of a butylamino group from spermidine to lysine side chain, leading to the formation of the unusual amino acid hypusine. eIF-5As are the only known proteins to undergo this modification, which is essential for their function.

Its function is as follows. Translation factor that promotes translation elongation and termination, particularly upon ribosome stalling at specific amino acid sequence contexts. Binds between the exit (E) and peptidyl (P) site of the ribosome and promotes rescue of stalled ribosome: specifically required for efficient translation of polyproline-containing peptides as well as other motifs that stall the ribosome. Acts as a ribosome quality control (RQC) cofactor by joining the RQC complex to facilitate peptidyl transfer during CAT tailing step. In Nicotiana plumbaginifolia (Leadwort-leaved tobacco), this protein is Eukaryotic translation initiation factor 5A-2 (EIF-5A2).